Consider the following 334-residue polypeptide: MSDALIAPNASSSEAPQSPAEHYDPTRKQKSADKTARIPIKIVPAEKLKKPDWIRVKAATGNSRFYEIKDILRANNLVTVCEEASCPNIGECFGKGTATFMIMGDKCTRRCPFCDVGHGRPDPLDVNEPGNLARTIAQLKLNYVVITSVDRDDLRDGGAQHYVDCISQTRELSPATRIEVLVPDFRGRLDKALDILQACPPDVMNHNMETVPRLYKQARPGADYAHSLKLLQEFKRRNPNVPTKSGLMVGLGETDEEILEVMRDMRAHDIDMLTIGQYLAPSNHHLPVLRYVHPDTFKMFEEEAYKMGFTHAAVGAMVRSSYHADQQAHQAGFA.

The segment at 1-36 (MSDALIAPNASSSEAPQSPAEHYDPTRKQKSADKTA) is disordered. A compositionally biased stretch (low complexity) spans 7–20 (APNASSSEAPQSPA). Basic and acidic residues predominate over residues 21–36 (EHYDPTRKQKSADKTA). The [4Fe-4S] cluster site is built by C81, C86, C92, C107, C111, C114, and S321. Positions 92-310 (CFGKGTATFM…EEEAYKMGFT (219 aa)) constitute a Radical SAM core domain.

The protein belongs to the radical SAM superfamily. Lipoyl synthase family. It depends on [4Fe-4S] cluster as a cofactor.

It is found in the cytoplasm. The catalysed reaction is [[Fe-S] cluster scaffold protein carrying a second [4Fe-4S](2+) cluster] + N(6)-octanoyl-L-lysyl-[protein] + 2 oxidized [2Fe-2S]-[ferredoxin] + 2 S-adenosyl-L-methionine + 4 H(+) = [[Fe-S] cluster scaffold protein] + N(6)-[(R)-dihydrolipoyl]-L-lysyl-[protein] + 4 Fe(3+) + 2 hydrogen sulfide + 2 5'-deoxyadenosine + 2 L-methionine + 2 reduced [2Fe-2S]-[ferredoxin]. The protein operates within protein modification; protein lipoylation via endogenous pathway; protein N(6)-(lipoyl)lysine from octanoyl-[acyl-carrier-protein]: step 2/2. Its function is as follows. Catalyzes the radical-mediated insertion of two sulfur atoms into the C-6 and C-8 positions of the octanoyl moiety bound to the lipoyl domains of lipoate-dependent enzymes, thereby converting the octanoylated domains into lipoylated derivatives. This chain is Lipoyl synthase, found in Cupriavidus taiwanensis (strain DSM 17343 / BCRC 17206 / CCUG 44338 / CIP 107171 / LMG 19424 / R1) (Ralstonia taiwanensis (strain LMG 19424)).